We begin with the raw amino-acid sequence, 143 residues long: Transcriptional regulator MraZ (143 aa).

SpoVT-AbrB domains lie at 5 to 47 (EYNH…SMDE) and 76 to 119 (ATEC…SSDQ).

It belongs to the MraZ family. As to quaternary structure, forms oligomers.

It localises to the cytoplasm. The protein resides in the nucleoid. This is Transcriptional regulator MraZ from Alkaliphilus metalliredigens (strain QYMF).